The sequence spans 109 residues: MQHPPCEPGNCLSLKEKKITEGSGGVCWGGETDASNPAPALTACCAAEREANVEQGLAGRLLLCNYERRVVRRCKIAGRGRAPLGTRPLDVSSFKLKEEGRPPCLKINK.

In terms of assembly, interacts with MYCN and GSK3B. In terms of tissue distribution, expressed in the neuronal cells of the cerebrum and cerebellum, spermatocytes of the testis, pancreatic cells and also the heart. Expressed in both primary and metastatic neuroblastomas and in thyroid tumors (at protein level). Expression is associated with poor prognosis in neuroblastoma. Expressed in the fetal brain, lung, liver and kidney at varying low levels.

Its subcellular location is the cytoplasm. The protein localises to the nucleus. Regulates stability of MYCN in neuroblastoma cells by inhibiting GSK3B-mediated MYCN phosphorylation. Inhibits GSK3B activity by promoting its phosphorylation at 'Ser-9'. This chain is N-cym protein (MYCNOS), found in Homo sapiens (Human).